We begin with the raw amino-acid sequence, 479 residues long: UDP-N-acetylmuramate--L-alanine ligase (479 aa).

126–132 serves as a coordination point for ATP; sequence GTHGKTT.

The protein belongs to the MurCDEF family.

The protein resides in the cytoplasm. The catalysed reaction is UDP-N-acetyl-alpha-D-muramate + L-alanine + ATP = UDP-N-acetyl-alpha-D-muramoyl-L-alanine + ADP + phosphate + H(+). It participates in cell wall biogenesis; peptidoglycan biosynthesis. Cell wall formation. This chain is UDP-N-acetylmuramate--L-alanine ligase, found in Alkalilimnicola ehrlichii (strain ATCC BAA-1101 / DSM 17681 / MLHE-1).